The following is a 556-amino-acid chain: Formate--tetrahydrofolate ligase 1 (556 aa).

Position 65–72 (65–72) interacts with ATP; that stretch reads TPAGEGKS.

The protein belongs to the formate--tetrahydrofolate ligase family.

It catalyses the reaction (6S)-5,6,7,8-tetrahydrofolate + formate + ATP = (6R)-10-formyltetrahydrofolate + ADP + phosphate. It participates in one-carbon metabolism; tetrahydrofolate interconversion. The sequence is that of Formate--tetrahydrofolate ligase 1 from Streptococcus pyogenes serotype M2 (strain MGAS10270).